The sequence spans 58 residues: UPF0434 protein Swoo_1821 (58 aa).

This sequence belongs to the UPF0434 family.

This Shewanella woodyi (strain ATCC 51908 / MS32) protein is UPF0434 protein Swoo_1821.